Reading from the N-terminus, the 50-residue chain is Ribosome-inactivating protein lyophyllin (50 aa).

The enzyme catalyses Endohydrolysis of the N-glycosidic bond at one specific adenosine on the 28S rRNA.. Functionally, N-glycosylase that inhibits protein synthesis by depurinating ribosomal rRNA, and thus acts as a ribosomal inactivating protein (RIP). Has adenine polynucleotide glycosidase activity on the poly(A) substrate A30-ssDNA. Inhibits cell-free translation in rabbit reticulocyte lysate system with an IC(50) of 1 nM. May function in the defense response to pathogens. Displays antifungal activity against C.comatus and P.piricola, but not against R.solani, M.arachidicola and C.gossypii. Inhibits mycelial growth in P.piricola with an IC(50) of 2.5 uM. Has cytotoxic activity against the human cancer cell lines Hela, HepG2, and JAR, with IC(50) of 358.8, 489.8, and 926.9 nM respectively. It also inhibits HIV-1 reverse transcriptase activity (IC(50)=7.9 nM) and disrupts mouse embryonic development. This is Ribosome-inactivating protein lyophyllin from Lyophyllum shimeji (Hon-shimeji).